The chain runs to 737 residues: Dual specificity protein kinase KNS1 (737 aa).

Disordered regions lie at residues 1-33 (MSQNIQIGTRKRSRANMNNSTTTGPANNTSSNK) and 270-290 (SSLRKFTSNGSSESASSNKSN). Residues 15 to 33 (ANMNNSTTTGPANNTSSNK) are compositionally biased toward polar residues. Residues 277–290 (SNGSSESASSNKSN) show a composition bias toward low complexity. A Protein kinase domain is found at 313–720 (FVVKDLLGQG…AKDALDHEWF (408 aa)). Residues 319-327 (LGQGTFGKV) and Lys-343 each bind ATP. Asp-440 serves as the catalytic Proton acceptor. Thr-562 carries the phosphothreonine modification.

The protein belongs to the protein kinase superfamily. CMGC Ser/Thr protein kinase family. Lammer subfamily. In terms of processing, phosphorylated (auto-) on Ser/Thr/Tyr.

It catalyses the reaction L-seryl-[protein] + ATP = O-phospho-L-seryl-[protein] + ADP + H(+). The enzyme catalyses L-threonyl-[protein] + ATP = O-phospho-L-threonyl-[protein] + ADP + H(+). It carries out the reaction L-tyrosyl-[protein] + ATP = O-phospho-L-tyrosyl-[protein] + ADP + H(+). Functionally, nonessential protein kinase. This is Dual specificity protein kinase KNS1 (KNS1) from Saccharomyces cerevisiae (strain ATCC 204508 / S288c) (Baker's yeast).